Reading from the N-terminus, the 252-residue chain is Imidazole glycerol phosphate synthase subunit HisF (252 aa).

Catalysis depends on residues aspartate 11 and aspartate 130.

The protein belongs to the HisA/HisF family. In terms of assembly, heterodimer of HisH and HisF.

The protein localises to the cytoplasm. The catalysed reaction is 5-[(5-phospho-1-deoxy-D-ribulos-1-ylimino)methylamino]-1-(5-phospho-beta-D-ribosyl)imidazole-4-carboxamide + L-glutamine = D-erythro-1-(imidazol-4-yl)glycerol 3-phosphate + 5-amino-1-(5-phospho-beta-D-ribosyl)imidazole-4-carboxamide + L-glutamate + H(+). The protein operates within amino-acid biosynthesis; L-histidine biosynthesis; L-histidine from 5-phospho-alpha-D-ribose 1-diphosphate: step 5/9. IGPS catalyzes the conversion of PRFAR and glutamine to IGP, AICAR and glutamate. The HisF subunit catalyzes the cyclization activity that produces IGP and AICAR from PRFAR using the ammonia provided by the HisH subunit. The sequence is that of Imidazole glycerol phosphate synthase subunit HisF from Staphylococcus epidermidis (strain ATCC 35984 / DSM 28319 / BCRC 17069 / CCUG 31568 / BM 3577 / RP62A).